Here is a 193-residue protein sequence, read N- to C-terminus: Non-canonical purine NTP pyrophosphatase homolog (193 aa).

The protein belongs to the HAM1 NTPase family.

This is Non-canonical purine NTP pyrophosphatase homolog from Halalkalibacterium halodurans (strain ATCC BAA-125 / DSM 18197 / FERM 7344 / JCM 9153 / C-125) (Bacillus halodurans).